A 291-amino-acid chain; its full sequence is ATP phosphoribosyltransferase (291 aa).

Belongs to the ATP phosphoribosyltransferase family. Long subfamily. Requires Mg(2+) as cofactor.

The protein localises to the cytoplasm. The enzyme catalyses 1-(5-phospho-beta-D-ribosyl)-ATP + diphosphate = 5-phospho-alpha-D-ribose 1-diphosphate + ATP. Its pathway is amino-acid biosynthesis; L-histidine biosynthesis; L-histidine from 5-phospho-alpha-D-ribose 1-diphosphate: step 1/9. Feedback inhibited by histidine. Functionally, catalyzes the condensation of ATP and 5-phosphoribose 1-diphosphate to form N'-(5'-phosphoribosyl)-ATP (PR-ATP). Has a crucial role in the pathway because the rate of histidine biosynthesis seems to be controlled primarily by regulation of HisG enzymatic activity. This Desulfosudis oleivorans (strain DSM 6200 / JCM 39069 / Hxd3) (Desulfococcus oleovorans) protein is ATP phosphoribosyltransferase.